A 340-amino-acid chain; its full sequence is Ketol-acid reductoisomerase (NADP(+)) (340 aa).

A KARI N-terminal Rossmann domain is found at 1–183 (MAITVYYDKD…GGGRTGIIET (183 aa)). NADP(+) is bound by residues 26 to 29 (FGSQ), Arg49, Ser52, Ser54, and 84 to 87 (DEIQ). His109 is an active-site residue. An NADP(+)-binding site is contributed by Gly135. The KARI C-terminal knotted domain maps to 184-329 (TFKAETETDL…RNLRAMMPWI (146 aa)). Asp192, Glu196, Glu228, and Glu232 together coordinate Mg(2+). Substrate is bound at residue Ser253.

This sequence belongs to the ketol-acid reductoisomerase family. It depends on Mg(2+) as a cofactor.

The enzyme catalyses (2R)-2,3-dihydroxy-3-methylbutanoate + NADP(+) = (2S)-2-acetolactate + NADPH + H(+). It carries out the reaction (2R,3R)-2,3-dihydroxy-3-methylpentanoate + NADP(+) = (S)-2-ethyl-2-hydroxy-3-oxobutanoate + NADPH + H(+). Its pathway is amino-acid biosynthesis; L-isoleucine biosynthesis; L-isoleucine from 2-oxobutanoate: step 2/4. It functions in the pathway amino-acid biosynthesis; L-valine biosynthesis; L-valine from pyruvate: step 2/4. In terms of biological role, involved in the biosynthesis of branched-chain amino acids (BCAA). Catalyzes an alkyl-migration followed by a ketol-acid reduction of (S)-2-acetolactate (S2AL) to yield (R)-2,3-dihydroxy-isovalerate. In the isomerase reaction, S2AL is rearranged via a Mg-dependent methyl migration to produce 3-hydroxy-3-methyl-2-ketobutyrate (HMKB). In the reductase reaction, this 2-ketoacid undergoes a metal-dependent reduction by NADPH to yield (R)-2,3-dihydroxy-isovalerate. This Campylobacter jejuni subsp. jejuni serotype O:6 (strain 81116 / NCTC 11828) protein is Ketol-acid reductoisomerase (NADP(+)).